Consider the following 170-residue polypeptide: Inducible metalloproteinase inhibitor protein (170 aa).

The signal sequence occupies residues 1–19 (MKCLLYLCLWCYCVLVSSS). N-linked (GlcNAc...) asparagine glycans are attached at residues Asn-48 and Asn-149.

Cleaved. Post-translationally, five disulfide bonds are present. When artificially cleaved by thermolysin between Asn-56 and Ile-57, the two obtained chains (called heavy and light chains) remain linked. In terms of processing, the N-terminus is blocked.

Its function is as follows. Inhibits thermolysin, bacillolysin and pseudolysin, B.polymyxa metalloprotease and human MMP1 and MMP3. No activity on trypsin or cysteine protease papain. This is Inducible metalloproteinase inhibitor protein (IMPI) from Galleria mellonella (Greater wax moth).